The chain runs to 449 residues: Tryptophan synthase beta chain 2 (449 aa).

Lys116 is subject to N6-(pyridoxal phosphate)lysine.

The protein belongs to the TrpB family. Tetramer of two alpha and two beta chains. The cofactor is pyridoxal 5'-phosphate.

It carries out the reaction (1S,2R)-1-C-(indol-3-yl)glycerol 3-phosphate + L-serine = D-glyceraldehyde 3-phosphate + L-tryptophan + H2O. The protein operates within amino-acid biosynthesis; L-tryptophan biosynthesis; L-tryptophan from chorismate: step 5/5. In terms of biological role, the beta subunit is responsible for the synthesis of L-tryptophan from indole and L-serine. This chain is Tryptophan synthase beta chain 2 (trpB2), found in Aeropyrum pernix (strain ATCC 700893 / DSM 11879 / JCM 9820 / NBRC 100138 / K1).